Reading from the N-terminus, the 398-residue chain is Argininosuccinate synthase (398 aa).

9-17 (AYSGGLDTS) is an ATP binding site. Tyr85 contributes to the L-citrulline binding site. Position 115 (Gly115) interacts with ATP. Residues Thr117, Asn121, and Asp122 each coordinate L-aspartate. Asn121 is an L-citrulline binding site. Residues Arg125, Ser173, Glu258, and Tyr270 each contribute to the L-citrulline site.

This sequence belongs to the argininosuccinate synthase family. Type 1 subfamily. Homotetramer.

Its subcellular location is the cytoplasm. It carries out the reaction L-citrulline + L-aspartate + ATP = 2-(N(omega)-L-arginino)succinate + AMP + diphosphate + H(+). It functions in the pathway amino-acid biosynthesis; L-arginine biosynthesis; L-arginine from L-ornithine and carbamoyl phosphate: step 2/3. The protein is Argininosuccinate synthase of Streptococcus pneumoniae (strain Hungary19A-6).